The sequence spans 675 residues: Protein PALS1 (675 aa).

Disordered stretches follow at residues 1-34 and 51-78; these read MTTS…KHRE and RRSA…KKQE. The interval 1 to 345 is required for the correct localization of PALS1 and PATJ at cell-cell contacts and the normal formation of tight junctions and adherens junctions; sequence MTTSHMNGHV…QQIKPPPAKE (345 aa). 2 stretches are compositionally biased toward basic and acidic residues: residues 10-34 and 54-78; these read VTEE…KHRE and AQLE…KKQE. 2 positions are modified to phosphoserine: Ser-14 and Ser-25. Positions 21 to 140 are interaction with PARD6B; the sequence is VDLASPEEHQ…LKHIQHTLVD (120 aa). 2 positions are modified to phosphoserine: Ser-83 and Ser-84. 2 consecutive L27 domains span residues 120–177 and 179–235; these read KILE…NKAS and PFPL…MQLE. Residues 181 to 243 are interaction with LIN7C; that stretch reads PLISNAQDLA…LEPITDERVY (63 aa). The PDZ domain maps to 256–336; it reads IVRIEKARDI…TLTFVLIPSQ (81 aa). The region spanning 345 to 417 is the SH3 domain; the sequence is ETVIHVKAHF…PGKSFQQQRE (73 aa). Positions 479-660 constitute a Guanylate kinase-like domain; that stretch reads KRPIILIGPQ…AYQELLRLIN (182 aa). 486–493 serves as a coordination point for ATP; sequence GPQNCGQN.

It belongs to the MAGUK family. Heterodimer with MPP1. Forms a heterotrimeric complex composed of PALS1, LIN7B and PATJ; the N-terminal L27 domain of PALS1 interacts with the L27 domain of PATJ and the C-terminal L27 domain of PALS1 interacts with the L27 domain of LIN7B. Component of a complex composed of PALS1, CRB1 and MPP4. Component of a complex whose core is composed of ARHGAP17, AMOT, PALS1, PATJ and PARD3/PAR3. Component of a complex composed of PALS1, CRB1 and EPB41L5. Within the complex, interacts (via HOOK domain) with EPB41L5 (via FERM domain), and interacts with CRB1 (via intracellular domain). Component of a complex composed of PALS1, MPP3 and CRB1; PALS1 acts as a bridging protein between MPP3 (via guanylate kinase-like domain) and CRB1. Component of a complex composed of CRB3, PALS1 and PATJ. As part of the Crumbs complex; interacts with WWP1, the interaction is enhanced by AMOTL2 and facilitates WWP1 localization to the plasma membrane. The Crumbs complex promotes monoubiquitination of AMOTL2 by WWP1, which activates the Hippo signaling pathway. Interacts (via PDZ domain) with PATJ (via N-terminus). Interacts with EZR. Interacts (via PDZ domain) with CRB1 (via C-terminal ERLI motif). While the PDZ domain is sufficient for interaction with CRB1, the adjacent SH3 and guanylate kinase-like domains are likely to contribute to a high affinity interaction. Interacts with WWTR1/TAZ (via WW domain). Interacts with MPP7. Interacts (via PDZ domain) with CRB3 (via C-terminus). Interacts with LIN7C. Interacts with MPDZ. Interacts with PARD6B. Interacts with SC6A1. Interacts with CDH5; the interaction promotes PALS1 localization to cell junctions and is required for CDH5-mediated vascular lumen formation and endothelial cell. Interacts with NPHP1 (via coiled coil and SH3 domains). Interacts with NPHP4. Interacts with CRB2. In terms of assembly, (Microbial infection) Interacts (via PDZ domain) with human coronaviruses SARS-CoV and, probably, SARS-CoV-2 envelope small membrane protein E (via C-terminus); this inhibits the interaction between PALS1 and CRB3. In terms of tissue distribution, expressed at the outer limiting membrane in the retina (at protein level). Expressed in T lymphocytes (at protein level). Expressed in the kidney (at protein level).

The protein localises to the golgi apparatus. The protein resides in the cell membrane. It is found in the endomembrane system. Its subcellular location is the cell junction. It localises to the tight junction. The protein localises to the adherens junction. The protein resides in the cell projection. It is found in the axon. Its subcellular location is the perikaryon. It localises to the apical cell membrane. The protein localises to the endoplasmic reticulum-Golgi intermediate compartment. Its function is as follows. Plays a role in tight junction biogenesis and in the establishment of cell polarity in epithelial cells. Also involved in adherens junction biogenesis by ensuring correct localization of the exocyst complex protein EXOC4/SEC8 which allows trafficking of adherens junction structural component CDH1 to the cell surface. Plays a role through its interaction with CDH5 in vascular lumen formation and endothelial membrane polarity. Required during embryonic and postnatal retinal development. Required for the maintenance of cerebellar progenitor cells in an undifferentiated proliferative state, preventing premature differentiation, and is required for cerebellar histogenesis, fissure formation, cerebellar layer organization and cortical development. Plays a role in neuronal progenitor cell survival, potentially via promotion of mTOR signaling. Plays a role in the radial and longitudinal extension of the myelin sheath in Schwann cells. May modulate SC6A1/GAT1-mediated GABA uptake by stabilizing the transporter. Plays a role in the T-cell receptor-mediated activation of NF-kappa-B. Required for localization of EZR to the apical membrane of parietal cells and may play a role in the dynamic remodeling of the apical cytoskeleton. Required for the normal polarized localization of the vesicular marker STX4. Required for the correct trafficking of the myelin proteins PMP22 and MAG. Involved in promoting phosphorylation and cytoplasmic retention of transcriptional coactivators YAP1 and WWTR1/TAZ which leads to suppression of TGFB1-dependent transcription of target genes such as CCN2/CTGF, SERPINE1/PAI1, SNAI1/SNAIL1 and SMAD7. In terms of biological role, (Microbial infection) Acts as an interaction partner for human coronaviruses SARS-CoV and, probably, SARS-CoV-2 envelope protein E which results in delayed formation of tight junctions and disregulation of cell polarity. This Homo sapiens (Human) protein is Protein PALS1.